The sequence spans 869 residues: Probable beta-glucosidase F (869 aa).

The N-terminal stretch at 1–19 (MRVLSAIALVASLASSALS) is a signal peptide. N-linked (GlcNAc...) asparagine glycans are attached at residues N77 and N261. Residue D289 is part of the active site. N332, N364, N399, and N478 each carry an N-linked (GlcNAc...) asparagine glycan. The segment at 677–697 (STYPPTRPPKGPTPTYPTAIP) is disordered. Residues 681 to 691 (PTRPPKGPTPT) show a composition bias toward pro residues. An N-linked (GlcNAc...) asparagine glycan is attached at N728.

The protein belongs to the glycosyl hydrolase 3 family.

The protein resides in the secreted. The enzyme catalyses Hydrolysis of terminal, non-reducing beta-D-glucosyl residues with release of beta-D-glucose.. It participates in glycan metabolism; cellulose degradation. Its function is as follows. Beta-glucosidases are one of a number of cellulolytic enzymes involved in the degradation of cellulosic biomass. Catalyzes the last step releasing glucose from the inhibitory cellobiose. This is Probable beta-glucosidase F (bglF) from Aspergillus fumigatus (strain CBS 144.89 / FGSC A1163 / CEA10) (Neosartorya fumigata).